The primary structure comprises 292 residues: Phosphoribulokinase, chromosomal (292 aa).

12–20 is an ATP binding site; that stretch reads GSSGAGTTS.

This sequence belongs to the phosphoribulokinase family. In terms of assembly, homooctamer.

The catalysed reaction is D-ribulose 5-phosphate + ATP = D-ribulose 1,5-bisphosphate + ADP + H(+). It participates in carbohydrate biosynthesis; Calvin cycle. In Cupriavidus necator (strain ATCC 17699 / DSM 428 / KCTC 22496 / NCIMB 10442 / H16 / Stanier 337) (Ralstonia eutropha), this protein is Phosphoribulokinase, chromosomal (cfxP).